The chain runs to 144 residues: Cytochrome c3 (144 aa).

A signal peptide spans 1-24 (MRYLVISLFAVSLLMAGSALVGNA). The heme c site is built by His-51, His-54, Cys-59, Cys-62, His-63, His-64, Cys-76, Cys-81, His-82, His-100, Cys-108, Cys-111, His-112, Cys-125, Cys-128, and His-129.

This sequence belongs to the cytochrome c family. As to quaternary structure, homodimer. Heterotrimer of cytochrome c3 FDH2C and formate dehydrogenase FDH2 alpha and beta subunits that forms the FdhABC(3) complex. In terms of processing, binds 4 heme c groups per subunit.

Its subcellular location is the periplasm. Participates in sulfate respiration coupled with phosphorylation by transferring electrons from the enzyme dehydrogenase to ferredoxin. Gamma chain of the formate dehydrogenase (FDH) that catalyzes the reversible two-electron oxidation of formate to carbon dioxide. The gamma subunit of formate dehydrogenase forms a c-type heme. This chain is Cytochrome c3, found in Nitratidesulfovibrio vulgaris (strain ATCC 29579 / DSM 644 / CCUG 34227 / NCIMB 8303 / VKM B-1760 / Hildenborough) (Desulfovibrio vulgaris).